A 267-amino-acid chain; its full sequence is Ribosomal RNA small subunit methyltransferase A (267 aa).

Positions 18, 20, 45, 66, 91, and 112 each coordinate S-adenosyl-L-methionine.

This sequence belongs to the class I-like SAM-binding methyltransferase superfamily. rRNA adenine N(6)-methyltransferase family. RsmA subfamily.

The protein resides in the cytoplasm. The enzyme catalyses adenosine(1518)/adenosine(1519) in 16S rRNA + 4 S-adenosyl-L-methionine = N(6)-dimethyladenosine(1518)/N(6)-dimethyladenosine(1519) in 16S rRNA + 4 S-adenosyl-L-homocysteine + 4 H(+). Functionally, specifically dimethylates two adjacent adenosines (A1518 and A1519) in the loop of a conserved hairpin near the 3'-end of 16S rRNA in the 30S particle. May play a critical role in biogenesis of 30S subunits. The chain is Ribosomal RNA small subunit methyltransferase A from Shewanella sediminis (strain HAW-EB3).